The following is a 352-amino-acid chain: Protein RecA (352 aa).

68–75 (GPESSGKT) lines the ATP pocket.

This sequence belongs to the RecA family.

The protein localises to the cytoplasm. Its function is as follows. Can catalyze the hydrolysis of ATP in the presence of single-stranded DNA, the ATP-dependent uptake of single-stranded DNA by duplex DNA, and the ATP-dependent hybridization of homologous single-stranded DNAs. It interacts with LexA causing its activation and leading to its autocatalytic cleavage. The protein is Protein RecA of Clostridium perfringens (strain ATCC 13124 / DSM 756 / JCM 1290 / NCIMB 6125 / NCTC 8237 / Type A).